Consider the following 198-residue polypeptide: Inner membrane-spanning protein YciB (198 aa).

5 consecutive transmembrane segments (helical) span residues 36–56 (IFSA…ILYI), 67–87 (LTLV…SETF), 90–110 (WKAP…HFIG), 133–153 (LNIA…YVAF), and 162–182 (FKVF…GIYL).

It belongs to the YciB family.

It localises to the cell inner membrane. Its function is as follows. Plays a role in cell envelope biogenesis, maintenance of cell envelope integrity and membrane homeostasis. The polypeptide is Inner membrane-spanning protein YciB (Pseudomonas syringae pv. tomato (strain ATCC BAA-871 / DC3000)).